Reading from the N-terminus, the 351-residue chain is Tropomodulin-2 (351 aa).

The residue at position 25 (S25) is a Phosphoserine.

Belongs to the tropomodulin family. Binds to the N-terminus of tropomyosin and to actin. Neuronal-tissue specific.

It localises to the cytoplasm. The protein resides in the cytoskeleton. Functionally, blocks the elongation and depolymerization of the actin filaments at the pointed end. The Tmod/TM complex contributes to the formation of the short actin protofilament, which in turn defines the geometry of the membrane skeleton. The polypeptide is Tropomodulin-2 (Tmod2) (Mus musculus (Mouse)).